Consider the following 675-residue polypeptide: Probable metal-nicotianamine transporter YSL16 (675 aa).

Residues 1–11 (MDRHALGGGGA) are compositionally biased toward gly residues. The disordered stretch occupies residues 1 to 20 (MDRHALGGGGALEIEKTPEA). A run of 14 helical transmembrane segments spans residues 50 to 70 (GMVA…KLSL), 73 to 93 (GLIP…LRGW), 118 to 138 (CAVA…LLGL), 162 to 182 (GIGW…LTLL), 231 to 251 (ISFL…CGFL), 283 to 303 (LVNL…WPLI), 329 to 349 (FICI…VIVV), 393 to 413 (MAYT…PVMF), 421 to 441 (VIIA…GTGL), 453 to 473 (IALF…AGLV), 507 to 527 (VGQV…FFLF), 567 to 587 (LQLC…RDFL), 605 to 625 (FLVG…VFLW), and 633 to 653 (AALL…IWTF).

The protein belongs to the YSL (TC 2.A.67.2) family. In terms of tissue distribution, expressed in roots.

The protein localises to the membrane. Functionally, may be involved in the transport of nicotianamine-chelated metals. This Oryza sativa subsp. japonica (Rice) protein is Probable metal-nicotianamine transporter YSL16 (YSL16).